A 217-amino-acid chain; its full sequence is Lipid transferase CIDEA (217 aa).

The 78-residue stretch at 33–110 (PARPFRVSNH…ILEKGQKWTP (78 aa)) folds into the CIDE-N domain. Residues 163-180 (CTSFKAVLRNLLRFMSYA) are amphipathic helix.

The protein belongs to the CIDE family. In terms of assembly, homodimer. Interacts with CIDEC. Directly interacts with CEBPB. Interacts with isoform CLSTN3beta of CLSTN3; inhibiting the lipid transferase activity of CIDEA. Highly expressed in brown adipose tissue and, at lower levels, in white adipose tissue (at protein level). Undetectable in undifferentiated preadipocytes. Expressed in mammary gland during pregnancy and lactation, in epithelial cells, but not in the surrounding adipose tissue. Secreted into milk via milk fat globules.

The protein resides in the lipid droplet. It is found in the nucleus. It carries out the reaction a triacyl-sn-glycerol(in) = a triacyl-sn-glycerol(out). Its function is as follows. Lipid transferase that promotes unilocular lipid droplet formation by mediating lipid droplet fusion. Lipid droplet fusion promotes their enlargement, restricting lipolysis and favoring lipid storage. Localizes on the lipid droplet surface, at focal contact sites between lipid droplets, and mediates atypical lipid droplet fusion by promoting directional net neutral lipid transfer from the smaller to larger lipid droplets. The transfer direction may be driven by the internal pressure difference between the contacting lipid droplet pair and occurs at a lower rate than that promoted by CIDEC. May also act as a CEBPB coactivator in epithelial cells to control the expression of a subset of CEBPB downstream target genes, including ID2, IGF1, PRLR, SOCS1, SOCS3, XDH, but not casein. By interacting with CEBPB, strengthens the association of CEBPB with the XDH promoter, increases histone acetylation and dissociates HDAC1 from the promoter. When overexpressed, induces apoptosis; the physiological significance of its role in apoptosis is unclear. This Mus musculus (Mouse) protein is Lipid transferase CIDEA.